The chain runs to 414 residues: HERV-H LTR-associating protein 2 (414 aa).

A signal peptide spans 1–22; it reads MKAQTALSFFLILITSLSGSQG. The Ig-like V-type 1 domain occupies 61 to 131; the sequence is IHWKYQDSYK…YVGTAIQVIT (71 aa). N-linked (GlcNAc...) asparagine glycans are attached at residues asparagine 90 and asparagine 103. Residues 138–222 form the Ig-like C1-type domain; it reads VGVFLTPVMK…ENSLLKQTWT (85 aa). Cystine bridges form between cysteine 159–cysteine 210 and cysteine 243–cysteine 317. Residues 235 to 328 enclose the Ig-like V-type 2 domain; it reads QSEHVSLSCQ…ISSDEYTLLT (94 aa). Asparagine 318 is a glycosylation site (N-linked (GlcNAc...) asparagine). A helical membrane pass occupies residues 345–365; the sequence is KGLWILVPSAILAAFLLIWSV. Positions 383–414 are disordered; sequence GAQQERCCVPPGERCPSAPDNGEENVPLSGKV.

In terms of assembly, interacts with TMIGD2. Expressed at high levels in colon, kidney, testis, lung and pancreas, and at lower levels in small intestine, liver and skeletal muscle. In immune cells, highly expressed in B-cells, dendritic cells and macrophages. Not detected in T-cells.

The protein resides in the membrane. Its function is as follows. Through interaction with TMIGD2, costimulates T-cells in the context of TCR-mediated activation. Enhances T-cell proliferation and cytokine production via an AKT-dependent signaling cascade. The sequence is that of HERV-H LTR-associating protein 2 (HHLA2) from Homo sapiens (Human).